The following is a 492-amino-acid chain: Protein nucleotidyltransferase YdiU (492 aa).

Positions 91, 93, 94, 114, 126, 127, 180, and 187 each coordinate ATP. Asp-256 acts as the Proton acceptor in catalysis. Residues Asn-257 and Asp-266 each contribute to the Mg(2+) site. Asp-266 is a binding site for ATP.

Belongs to the SELO family. The cofactor is Mg(2+). Mn(2+) is required as a cofactor.

It carries out the reaction L-seryl-[protein] + ATP = 3-O-(5'-adenylyl)-L-seryl-[protein] + diphosphate. The catalysed reaction is L-threonyl-[protein] + ATP = 3-O-(5'-adenylyl)-L-threonyl-[protein] + diphosphate. The enzyme catalyses L-tyrosyl-[protein] + ATP = O-(5'-adenylyl)-L-tyrosyl-[protein] + diphosphate. It catalyses the reaction L-histidyl-[protein] + UTP = N(tele)-(5'-uridylyl)-L-histidyl-[protein] + diphosphate. It carries out the reaction L-seryl-[protein] + UTP = O-(5'-uridylyl)-L-seryl-[protein] + diphosphate. The catalysed reaction is L-tyrosyl-[protein] + UTP = O-(5'-uridylyl)-L-tyrosyl-[protein] + diphosphate. Nucleotidyltransferase involved in the post-translational modification of proteins. It can catalyze the addition of adenosine monophosphate (AMP) or uridine monophosphate (UMP) to a protein, resulting in modifications known as AMPylation and UMPylation. The polypeptide is Protein nucleotidyltransferase YdiU (Synechococcus elongatus (strain ATCC 33912 / PCC 7942 / FACHB-805) (Anacystis nidulans R2)).